A 471-amino-acid chain; its full sequence is Histidinol dehydrogenase (471 aa).

NAD(+) is bound by residues Tyr139, Gln204, and Asn236. Residues Thr259, Gln281, and His284 each coordinate substrate. Zn(2+) contacts are provided by Gln281 and His284. Active-site proton acceptor residues include Glu350 and His351. 4 residues coordinate substrate: His351, Asp384, Glu438, and His443. Asp384 contacts Zn(2+). Position 443 (His443) interacts with Zn(2+).

This sequence belongs to the histidinol dehydrogenase family. Requires Zn(2+) as cofactor.

The catalysed reaction is L-histidinol + 2 NAD(+) + H2O = L-histidine + 2 NADH + 3 H(+). It participates in amino-acid biosynthesis; L-histidine biosynthesis; L-histidine from 5-phospho-alpha-D-ribose 1-diphosphate: step 9/9. Functionally, catalyzes the sequential NAD-dependent oxidations of L-histidinol to L-histidinaldehyde and then to L-histidine. The protein is Histidinol dehydrogenase of Bifidobacterium longum (strain NCC 2705).